We begin with the raw amino-acid sequence, 463 residues long: RuvB-like 2 (463 aa).

Alanine 2 bears the N-acetylalanine mark. A Glycyl lysine isopeptide (Lys-Gly) (interchain with G-Cter in SUMO2) cross-link involves residue lysine 9. 77–84 (GQPGTGKT) is an ATP binding site. Serine 437 is modified (phosphoserine). Residues lysine 444 and lysine 456 each participate in a glycyl lysine isopeptide (Lys-Gly) (interchain with G-Cter in SUMO2) cross-link.

It belongs to the RuvB family. As to quaternary structure, forms homohexameric rings. Can form a dodecamer with RUVBL1 made of two stacked hexameric rings; however, even though RUVBL1 and RUVBL2 are present in equimolar ratio, the oligomeric status of each hexamer is not known. Oligomerization may regulate binding to nucleic acids and conversely, binding to nucleic acids may affect the dodecameric assembly. Interaction of the complex with DHX34 results in conformational changes of the N-terminus of the RUVBL2 subunits, resulting in loss of nucleotide binding ability and ATP hydrolysis of the complex. Interacts with the transcriptional activation domain of MYC. Interacts with ATF2. Component of the RNA polymerase II holoenzyme complex. May also act to bridge the LEF1/TCF1-CTNNB1 complex and TBP. Component of the NuA4 histone acetyltransferase complex which contains the catalytic subunit KAT5/TIP60 and the subunits EP400, TRRAP/PAF400, BRD8/SMAP, EPC1, DMAP1/DNMAP1, RUVBL1/TIP49, RUVBL2, ING3, actin, ACTL6A/BAF53A, MORF4L1/MRG15, MORF4L2/MRGX, MRGBP, YEATS4/GAS41, VPS72/YL1 and MEAF6. The NuA4 complex interacts with MYC and the adenovirus E1A protein. RUVBL2 interacts with EP400. Component of a NuA4-related complex which contains EP400, TRRAP/PAF400, SRCAP, BRD8/SMAP, EPC1, DMAP1/DNMAP1, RUVBL1/TIP49, RUVBL2, actin, ACTL6A/BAF53A, VPS72 and YEATS4/GAS41. Interacts with NPAT. Component of the chromatin-remodeling INO80 complex; specifically part of a complex module associated with the helicase ATP-binding and the helicase C-terminal domain of INO80. Component of some MLL1/MLL complex, at least composed of the core components KMT2A/MLL1, ASH2L, HCFC1/HCF1, WDR5 and RBBP5, as well as the facultative components BACC1, CHD8, E2F6, HSP70, INO80C, KANSL1, LAS1L, MAX, MCRS1, MGA, MYST1/MOF, PELP1, PHF20, PRP31, RING2, RUVB1/TIP49A, RUVB2/TIP49B, SENP3, TAF1, TAF4, TAF6, TAF7, TAF9 and TEX10. Interacts with IGHMBP2. Interacts with TELO2. Interacts with HINT1. Component of a SWR1-like complex. Component of the R2TP complex composed at least of RUVBL1, RUVBL2, RPAP3 and PIHD1. Component of the PAQosome complex which is responsible for the biogenesis of several protein complexes and which consists of R2TP complex members RUVBL1, RUVBL2, RPAP3 and PIH1D1, URI complex members PFDN2, PFDN6, PDRG1, UXT and URI1 as well as ASDURF, POLR2E and DNAAF10/WDR92. Interacts with ITFG1. Interacts with ZMYND10. Interacts with WAC; WAC positively regulates MTOR activity by promoting the assembly of the TTT complex composed of TELO2, TTI1 and TTI2 and the RUVBL complex composed of RUVBL1 and RUVBL2 into the TTT-RUVBL complex which leads to the dimerization of the mTORC1 complex and its subsequent activation. Forms a complex with APPL1 and APPL2. Interacts with ZNHIT2 (via HIT-type zinc finger) in the presence of ATP or ADP; shows a stronger interaction in the presence of ADP. The RUVBL1/RUVBL2 complex interacts with ZNHIT1 (via HIT-type zinc finger), ZNHIT3 (via HIT-type zinc finger), ZNHIT6 (via HIT-type zinc finger) and DDX59/ZNHIT5 (via HIT-type zinc finger) in the presence of ADP. Interacts with NOPCHAP1; the interaction is direct and disrupted upon ATP binding. Interacts with SMG1. In terms of assembly, (Microbial infection) Interacts with Mumps L polymerase; this interaction regulates the viral transcription. Ubiquitously expressed. Highly expressed in testis and thymus.

It localises to the nucleus matrix. The protein resides in the nucleus. The protein localises to the nucleoplasm. Its subcellular location is the cytoplasm. It is found in the membrane. It localises to the dynein axonemal particle. The enzyme catalyses ATP + H2O = ADP + phosphate + H(+). Possesses single-stranded DNA-stimulated ATPase and ATP-dependent DNA helicase (5' to 3') activity; hexamerization is thought to be critical for ATP hydrolysis and adjacent subunits in the ring-like structure contribute to the ATPase activity. Component of the NuA4 histone acetyltransferase complex which is involved in transcriptional activation of select genes principally by acetylation of nucleosomal histones H4 and H2A. This modification may both alter nucleosome -DNA interactions and promote interaction of the modified histones with other proteins which positively regulate transcription. This complex may be required for the activation of transcriptional programs associated with oncogene and proto-oncogene mediated growth induction, tumor suppressor mediated growth arrest and replicative senescence, apoptosis, and DNA repair. The NuA4 complex ATPase and helicase activities seem to be, at least in part, contributed by the association of RUVBL1 and RUVBL2 with EP400. NuA4 may also play a direct role in DNA repair when recruited to sites of DNA damage. Component of a SWR1-like complex that specifically mediates the removal of histone H2A.Z/H2AZ1 from the nucleosome. Proposed core component of the chromatin remodeling INO80 complex which exhibits DNA- and nucleosome-activated ATPase activity and catalyzes ATP-dependent nucleosome sliding. Plays an essential role in oncogenic transformation by MYC and also modulates transcriptional activation by the LEF1/TCF1-CTNNB1 complex. May also inhibit the transcriptional activity of ATF2. Involved in the endoplasmic reticulum (ER)-associated degradation (ERAD) pathway where it negatively regulates expression of ER stress response genes. May play a role in regulating the composition of the U5 snRNP complex. This is RuvB-like 2 (RUVBL2) from Homo sapiens (Human).